Reading from the N-terminus, the 241-residue chain is 15,16-dihydrobiliverdin:ferredoxin oxidoreductase (241 aa).

Belongs to the HY2 family.

It carries out the reaction 15,16-dihydrobiliverdin + oxidized 2[4Fe-4S]-[ferredoxin] = biliverdin IXalpha + reduced 2[4Fe-4S]-[ferredoxin] + 2 H(+). Catalyzes the two-electron reduction of biliverdin IX-alpha at the C15 methine bridge. This Prochlorococcus marinus (strain SARG / CCMP1375 / SS120) protein is 15,16-dihydrobiliverdin:ferredoxin oxidoreductase (pebA).